A 347-amino-acid chain; its full sequence is Phenylalanine--tRNA ligase alpha subunit (347 aa).

A Mg(2+)-binding site is contributed by Glu-261.

The protein belongs to the class-II aminoacyl-tRNA synthetase family. Phe-tRNA synthetase alpha subunit type 1 subfamily. Tetramer of two alpha and two beta subunits. Mg(2+) is required as a cofactor.

It localises to the cytoplasm. The catalysed reaction is tRNA(Phe) + L-phenylalanine + ATP = L-phenylalanyl-tRNA(Phe) + AMP + diphosphate + H(+). This chain is Phenylalanine--tRNA ligase alpha subunit, found in Streptococcus equi subsp. zooepidemicus (strain MGCS10565).